A 101-amino-acid polypeptide reads, in one-letter code: Small ribosomal subunit protein uS14 (101 aa).

Residues 1–25 form a disordered region; it reads MAKVSAIQKNKSRQKKSQRLHNKRS. The span at 10–25 shows a compositional bias: basic residues; that stretch reads NKSRQKKSQRLHNKRS.

Belongs to the universal ribosomal protein uS14 family. Part of the 30S ribosomal subunit. Contacts proteins S3 and S10.

Its function is as follows. Binds 16S rRNA, required for the assembly of 30S particles and may also be responsible for determining the conformation of the 16S rRNA at the A site. The protein is Small ribosomal subunit protein uS14 of Rickettsia typhi (strain ATCC VR-144 / Wilmington).